A 577-amino-acid polypeptide reads, in one-letter code: Proline--tRNA ligase (577 aa).

The protein belongs to the class-II aminoacyl-tRNA synthetase family. ProS type 1 subfamily. As to quaternary structure, homodimer.

It is found in the cytoplasm. It carries out the reaction tRNA(Pro) + L-proline + ATP = L-prolyl-tRNA(Pro) + AMP + diphosphate. Catalyzes the attachment of proline to tRNA(Pro) in a two-step reaction: proline is first activated by ATP to form Pro-AMP and then transferred to the acceptor end of tRNA(Pro). As ProRS can inadvertently accommodate and process non-cognate amino acids such as alanine and cysteine, to avoid such errors it has two additional distinct editing activities against alanine. One activity is designated as 'pretransfer' editing and involves the tRNA(Pro)-independent hydrolysis of activated Ala-AMP. The other activity is designated 'posttransfer' editing and involves deacylation of mischarged Ala-tRNA(Pro). The misacylated Cys-tRNA(Pro) is not edited by ProRS. This is Proline--tRNA ligase from Helicobacter pylori (strain Shi470).